The primary structure comprises 393 residues: Putative bacilysin exporter BacE (393 aa).

A run of 10 helical transmembrane segments spans residues 11-31, 43-63, 69-89, 92-112, 133-155, 160-177, 215-235, 244-264, 287-307, and 353-373; these read LLFG…ALLI, SGVI…GVLV, VKIM…LTFL, GEYP…GVFF, LFAK…FLLG, LAVA…FFIS, MFTM…FPIV, IGNF…AALV, ALFL…LFFI, and IVDA…LFLH.

This sequence belongs to the major facilitator superfamily.

The protein resides in the cell membrane. Its function is as follows. Part of the bacilysin biosynthesis operon. May be involved in self-resistance to bacilysin by permitting efflux of this antibiotic. The chain is Putative bacilysin exporter BacE (bacE) from Bacillus subtilis.